The primary structure comprises 294 residues: N-acetylmuramic acid 6-phosphate etherase (294 aa).

Residues Thr-56–Lys-219 form the SIS domain. Residue Glu-84 is the Proton donor of the active site. Residue Glu-115 is part of the active site.

Belongs to the GCKR-like family. MurNAc-6-P etherase subfamily. Homodimer.

It carries out the reaction N-acetyl-D-muramate 6-phosphate + H2O = N-acetyl-D-glucosamine 6-phosphate + (R)-lactate. It participates in amino-sugar metabolism; 1,6-anhydro-N-acetylmuramate degradation. It functions in the pathway amino-sugar metabolism; N-acetylmuramate degradation. Its pathway is cell wall biogenesis; peptidoglycan recycling. Its function is as follows. Specifically catalyzes the cleavage of the D-lactyl ether substituent of MurNAc 6-phosphate, producing GlcNAc 6-phosphate and D-lactate. Together with AnmK, is also required for the utilization of anhydro-N-acetylmuramic acid (anhMurNAc) either imported from the medium or derived from its own cell wall murein, and thus plays a role in cell wall recycling. In Francisella tularensis subsp. tularensis (strain SCHU S4 / Schu 4), this protein is N-acetylmuramic acid 6-phosphate etherase.